The following is a 200-amino-acid chain: Rho-related protein racH (200 aa).

Position 11–18 (11–18 (GDMSVGKT)) interacts with GTP. The Effector region motif lies at 33 to 41 (YVPTVFDNY). Residues 58–62 (DTAGS) and 117–120 (TKLD) each bind GTP. The disordered stretch occupies residues 178–200 (EELAKSKKDSKKGDKDSKDCIIQ). C197 is subject to Cysteine methyl ester. Residue C197 is the site of S-geranylgeranyl cysteine attachment. Positions 198 to 200 (IIQ) are cleaved as a propeptide — removed in mature form.

The protein belongs to the small GTPase superfamily. Rho family.

It is found in the cell membrane. The chain is Rho-related protein racH (racH) from Dictyostelium discoideum (Social amoeba).